Reading from the N-terminus, the 185-residue chain is Ribosome-recycling factor (185 aa).

This sequence belongs to the RRF family.

The protein resides in the cytoplasm. Functionally, responsible for the release of ribosomes from messenger RNA at the termination of protein biosynthesis. May increase the efficiency of translation by recycling ribosomes from one round of translation to another. This chain is Ribosome-recycling factor, found in Proteus mirabilis (strain HI4320).